The sequence spans 130 residues: uncharacterized protein (130 aa).

Residues 76-102 (RKCKNGPSPNKRGSASGCSRRGGGRGS) are disordered.

This is an uncharacterized protein from Saccharomyces cerevisiae (strain ATCC 204508 / S288c) (Baker's yeast).